The primary structure comprises 359 residues: Peptide chain release factor 1 (359 aa).

Q235 is modified (N5-methylglutamine).

Belongs to the prokaryotic/mitochondrial release factor family. Post-translationally, methylated by PrmC. Methylation increases the termination efficiency of RF1.

The protein resides in the cytoplasm. In terms of biological role, peptide chain release factor 1 directs the termination of translation in response to the peptide chain termination codons UAG and UAA. This Verminephrobacter eiseniae (strain EF01-2) protein is Peptide chain release factor 1.